Here is a 345-residue protein sequence, read N- to C-terminus: Phosphoribosylformylglycinamidine cyclo-ligase (345 aa).

The protein belongs to the AIR synthase family.

The protein resides in the cytoplasm. The catalysed reaction is 2-formamido-N(1)-(5-O-phospho-beta-D-ribosyl)acetamidine + ATP = 5-amino-1-(5-phospho-beta-D-ribosyl)imidazole + ADP + phosphate + H(+). Its pathway is purine metabolism; IMP biosynthesis via de novo pathway; 5-amino-1-(5-phospho-D-ribosyl)imidazole from N(2)-formyl-N(1)-(5-phospho-D-ribosyl)glycinamide: step 2/2. The chain is Phosphoribosylformylglycinamidine cyclo-ligase from Escherichia fergusonii (strain ATCC 35469 / DSM 13698 / CCUG 18766 / IAM 14443 / JCM 21226 / LMG 7866 / NBRC 102419 / NCTC 12128 / CDC 0568-73).